A 354-amino-acid polypeptide reads, in one-letter code: Ferrochelatase (354 aa).

H204 and E306 together coordinate Fe cation.

This sequence belongs to the ferrochelatase family.

It is found in the cytoplasm. It carries out the reaction heme b + 2 H(+) = protoporphyrin IX + Fe(2+). It functions in the pathway porphyrin-containing compound metabolism; protoheme biosynthesis; protoheme from protoporphyrin-IX: step 1/1. Functionally, catalyzes the ferrous insertion into protoporphyrin IX. This Coxiella burnetii (strain CbuK_Q154) (Coxiella burnetii (strain Q154)) protein is Ferrochelatase.